An 88-amino-acid chain; its full sequence is Putative sulfur carrier protein AF_0554 (88 aa).

Cysteine 26 serves as the catalytic Cysteine persulfide intermediate.

The protein belongs to the sulfur carrier protein TusA family.

The sequence is that of Putative sulfur carrier protein AF_0554 from Archaeoglobus fulgidus (strain ATCC 49558 / DSM 4304 / JCM 9628 / NBRC 100126 / VC-16).